We begin with the raw amino-acid sequence, 433 residues long: E3 ubiquitin-protein ligase RGLG5 (433 aa).

The segment at 1 to 61 (MGGSSSKESP…SYNSGRQTPK (61 aa)) is disordered. Gly-2 carries the N-myristoyl glycine lipid modification. Residues 22–39 (SVSGSSSYSSAWDQSSYY) are compositionally biased toward low complexity. The segment covering 40–61 (QTPNHPSASPVSSYNSGRQTPK) has biased composition (polar residues). The VWFA domain occupies 93–313 (NLIVGIDVTK…KEAEFALSAL (221 aa)). Residues 340-383 (IALPPPTYATQSMRNSPRTSRSTSFQNKPYDNGVSSTPPSTTHN) are disordered. Residues 347–383 (YATQSMRNSPRTSRSTSFQNKPYDNGVSSTPPSTTHN) are compositionally biased toward polar residues. The segment at 390 to 423 (CPVCLVSAKNMAFNCGHQTCAGCGEDLHVCPICR) adopts an RING-type zinc-finger fold.

Interacts with PP2CA. N-myristoylated.

It is found in the cell membrane. The catalysed reaction is S-ubiquitinyl-[E2 ubiquitin-conjugating enzyme]-L-cysteine + [acceptor protein]-L-lysine = [E2 ubiquitin-conjugating enzyme]-L-cysteine + N(6)-ubiquitinyl-[acceptor protein]-L-lysine.. In terms of biological role, together with RGLG1, mediates the ubiquitination and subsequent proteasomal degradation of the target protein PP2CA. Functions as a positive regulator of abscisic acid (ABA) signaling through ABA-dependent degradation of PP2CA, a major inhibitor of ABA signaling. The chain is E3 ubiquitin-protein ligase RGLG5 from Arabidopsis thaliana (Mouse-ear cress).